Here is a 164-residue protein sequence, read N- to C-terminus: Transcription elongation factor GreA (164 aa).

It belongs to the GreA/GreB family.

Functionally, necessary for efficient RNA polymerase transcription elongation past template-encoded arresting sites. The arresting sites in DNA have the property of trapping a certain fraction of elongating RNA polymerases that pass through, resulting in locked ternary complexes. Cleavage of the nascent transcript by cleavage factors such as GreA or GreB allows the resumption of elongation from the new 3'terminus. GreA releases sequences of 2 to 3 nucleotides. This is Transcription elongation factor GreA from Helicobacter pylori (strain Shi470).